Here is a 111-residue protein sequence, read N- to C-terminus: Putative protein YddJ (111 aa).

The sequence is that of Putative protein YddJ (yddJ) from Escherichia coli (strain K12).